A 224-amino-acid polypeptide reads, in one-letter code: Transcription cofactor HES-6 (224 aa).

Residues 1–31 (MAPSQAPSRDRAGQEDEDRWEARGDRKARKP) form a disordered region. Positions 8–25 (SRDRAGQEDEDRWEARGD) are enriched in basic and acidic residues. The region spanning 25-77 (DRKARKPLVEKKRRARINESLQELRLLLAGTEVQAKLENAEVLELTVRRVQGA) is the bHLH domain. In terms of domain architecture, Orange spans 96 to 129 (FAAGYIQCMHEVHTFVSTCQAIDATVSAELLNHL). Residues 146–209 (GDSLAGLPGG…GPDLVSTSLG (64 aa)) form a disordered region. Residues 158–171 (RSSWPPGGSPESPL) show a composition bias toward low complexity. The segment covering 181–190 (LCSDLEEIPE) has biased composition (acidic residues). The WRPW motif motif lies at 221–224 (WRPW).

Transcription repression requires formation of a complex with a corepressor protein of the Groucho/TLE family. Interacts with HES1. In terms of tissue distribution, expressed in both undifferentiated and differentiated cells. High levels of expression are observed in several embryonic tissues including the nervous system, muscle and thymus. In the nervous system, initially expressed in the closing neural tube, then in the spinal cord, cranial and dorsal root ganglia, and brain neuroepithelium. Also expressed in epithelial cells of the embryonic respiratory, urinary and digestive systems. In the limb buds, expressed in skeletal muscle and presumptive tendons.

Its subcellular location is the nucleus. Its function is as follows. Does not bind DNA itself but suppresses both HES1-mediated N box-dependent transcriptional repression and binding of HES1 to E box sequences. Also suppresses HES1-mediated inhibition of the heterodimer formed by ASCL1/MASH1 and TCF3/E47, allowing ASCL1 and TCF3 to up-regulate transcription in its presence. Promotes cell differentiation. The chain is Transcription cofactor HES-6 from Mus musculus (Mouse).